The sequence spans 238 residues: Large ribosomal subunit protein uL1 (238 aa).

Belongs to the universal ribosomal protein uL1 family. As to quaternary structure, part of the 50S ribosomal subunit.

Its function is as follows. Binds directly to 23S rRNA. The L1 stalk is quite mobile in the ribosome, and is involved in E site tRNA release. In terms of biological role, protein L1 is also a translational repressor protein, it controls the translation of the L11 operon by binding to its mRNA. This is Large ribosomal subunit protein uL1 from Frankia alni (strain DSM 45986 / CECT 9034 / ACN14a).